Consider the following 172-residue polypeptide: Endoribonuclease YbeY (172 aa).

The Zn(2+) site is built by His-134, His-138, and His-144.

This sequence belongs to the endoribonuclease YbeY family. Requires Zn(2+) as cofactor.

The protein resides in the cytoplasm. Single strand-specific metallo-endoribonuclease involved in late-stage 70S ribosome quality control and in maturation of the 3' terminus of the 16S rRNA. This Burkholderia cenocepacia (strain HI2424) protein is Endoribonuclease YbeY.